A 79-amino-acid chain; its full sequence is Defensin-like protein 3 (79 aa).

The N-terminal stretch at 1-29 (MAKFASIVALLFAALVVFAAFEAPTVVEA) is a signal peptide. 4 disulfide bridges follow: Cys32/Cys79, Cys43/Cys64, Cys49/Cys73, and Cys53/Cys75.

The protein belongs to the DEFL family.

The protein resides in the secreted. In terms of biological role, possesses antifungal activity sensitive to inorganic cations. This chain is Defensin-like protein 3 (AFP3), found in Raphanus sativus (Radish).